A 392-amino-acid polypeptide reads, in one-letter code: Metallophosphoesterase 1 (392 aa).

A helical transmembrane segment spans residues Lys25–Val45. 6 residues coordinate a divalent metal cation: Asp73, Asp115, Asn153, His246, His300, and His302. The helical transmembrane segment at Asp352–His372 threads the bilayer.

This sequence belongs to the metallophosphoesterase superfamily. MPPE1 family. In terms of assembly, interacts with GPI-anchor proteins (via the GPI portion). Interacts with TMED10. Mn(2+) is required as a cofactor.

Its subcellular location is the endoplasmic reticulum-Golgi intermediate compartment membrane. In terms of biological role, metallophosphoesterase that catalyzes the removal of a side-chain ethanolamine-phosphate (EtNP) from the second mannose of the GPI-anchor protein intermediate. Participates in the glycan remodeling steps of GPI-anchor maturation to allow an efficient transport of GPI-anchor proteins from the endoplasmic reticulum to the Golgi. This is Metallophosphoesterase 1 from Ailuropoda melanoleuca (Giant panda).